The sequence spans 42 residues: Cytochrome b559 subunit beta (42 aa).

A helical transmembrane segment spans residues 17 to 33 (WLAIHAIGIPAVFFIGS). Residue His-21 coordinates heme.

Belongs to the PsbE/PsbF family. Heterodimer of an alpha subunit and a beta subunit. PSII is composed of 1 copy each of membrane proteins PsbA, PsbB, PsbC, PsbD, PsbE, PsbF, PsbH, PsbI, PsbJ, PsbK, PsbL, PsbM, PsbT, PsbX, PsbY, PsbZ, Psb30/Ycf12, at least 3 peripheral proteins of the oxygen-evolving complex and a large number of cofactors. It forms dimeric complexes. Requires heme b as cofactor.

The protein localises to the plastid. The protein resides in the cyanelle thylakoid membrane. This b-type cytochrome is tightly associated with the reaction center of photosystem II (PSII). PSII is a light-driven water:plastoquinone oxidoreductase that uses light energy to abstract electrons from H(2)O, generating O(2) and a proton gradient subsequently used for ATP formation. It consists of a core antenna complex that captures photons, and an electron transfer chain that converts photonic excitation into a charge separation. The polypeptide is Cytochrome b559 subunit beta (Cyanophora paradoxa).